Here is a 233-residue protein sequence, read N- to C-terminus: LexA repressor (233 aa).

The segment at residues 26–46 (FDEMKEALDLRSKSGIHRLIT) is a DNA-binding region (H-T-H motif). Active-site for autocatalytic cleavage activity residues include Ser154 and Lys192.

The protein belongs to the peptidase S24 family. As to quaternary structure, homodimer.

It catalyses the reaction Hydrolysis of Ala-|-Gly bond in repressor LexA.. In terms of biological role, represses a number of genes involved in the response to DNA damage (SOS response), including recA and lexA. In the presence of single-stranded DNA, RecA interacts with LexA causing an autocatalytic cleavage which disrupts the DNA-binding part of LexA, leading to derepression of the SOS regulon and eventually DNA repair. The polypeptide is LexA repressor (Roseobacter denitrificans (strain ATCC 33942 / OCh 114) (Erythrobacter sp. (strain OCh 114))).